We begin with the raw amino-acid sequence, 404 residues long: tRNA (carboxymethyluridine(34)-5-O)-methyltransferase (404 aa).

Serine 238 carries the post-translational modification Phosphoserine.

As to quaternary structure, interacts with TRM112A and TRM112B.

The catalysed reaction is 5-(carboxymethyl)uridine(34) in tRNA + S-adenosyl-L-methionine = 5-(2-methoxy-2-oxoethyl)uridine(34) in tRNA + S-adenosyl-L-homocysteine. In terms of biological role, catalyzes the methylation of 5-carboxymethyl uridine to 5-methylcarboxymethyl uridine at the wobble position of the anticodon loop in tRNA via its methyltransferase domain. Catalyzes the last step in the formation of 5-methylcarboxymethyl uridine at the wobble position of the anticodon loop in target tRNA. The polypeptide is tRNA (carboxymethyluridine(34)-5-O)-methyltransferase (Arabidopsis thaliana (Mouse-ear cress)).